Reading from the N-terminus, the 222-residue chain is Potassium-transporting ATPase KdpC subunit (222 aa).

Residues 13–35 (WAGLRSLLVLTVVTGVLYPLAVT) traverse the membrane as a helical segment. The segment at 136 to 162 (TADHKVKPSDVPADAVTSSGSGLDPDI) is disordered.

Belongs to the KdpC family. In terms of assembly, the system is composed of three essential subunits: KdpA, KdpB and KdpC.

The protein localises to the cell membrane. Functionally, part of the high-affinity ATP-driven potassium transport (or Kdp) system, which catalyzes the hydrolysis of ATP coupled with the electrogenic transport of potassium into the cytoplasm. This subunit acts as a catalytic chaperone that increases the ATP-binding affinity of the ATP-hydrolyzing subunit KdpB by the formation of a transient KdpB/KdpC/ATP ternary complex. The sequence is that of Potassium-transporting ATPase KdpC subunit from Streptomyces avermitilis (strain ATCC 31267 / DSM 46492 / JCM 5070 / NBRC 14893 / NCIMB 12804 / NRRL 8165 / MA-4680).